The following is a 533-amino-acid chain: NEDD8-activating enzyme E1 regulatory subunit (533 aa).

An interaction with uba3 region spans residues 330–343; it reads DMIADSDKFIKLQN.

This sequence belongs to the ubiquitin-activating E1 family. ULA1 subfamily. In terms of assembly, heterodimer of uba3 and nae1. The complex binds nedd8 and ube2m.

It functions in the pathway protein modification; protein neddylation. Its function is as follows. Regulatory subunit of the dimeric uba3-nae1 E1 enzyme. E1 activates nedd8 by first adenylating its C-terminal glycine residue with ATP, thereafter linking this residue to the side chain of the catalytic cysteine, yielding a nedd8-uba3 thioester and free AMP. E1 finally transfers nedd8 to the catalytic cysteine of ube2m. The covalent attachment of nedd8 to target proteins is known as 'neddylation' and the process is involved in the regulation of cell growth, viability and development. The polypeptide is NEDD8-activating enzyme E1 regulatory subunit (nae1) (Danio rerio (Zebrafish)).